A 693-amino-acid chain; its full sequence is Phosphoribosylformylglycinamidine synthase subunit PurL (693 aa).

His-34 is an active-site residue. ATP contacts are provided by Tyr-37 and Lys-76. Glu-78 serves as a coordination point for Mg(2+). Substrate contacts are provided by residues 79–82 (SHNH) and Arg-101. The active-site Proton acceptor is the His-80. Asp-102 contacts Mg(2+). Position 222 (Gln-222) interacts with substrate. Asp-248 provides a ligand contact to Mg(2+). A substrate-binding site is contributed by 292–294 (ETQ). Positions 470 and 507 each coordinate ATP. Ser-510 is a substrate binding site.

Belongs to the FGAMS family. Monomer. Part of the FGAM synthase complex composed of 1 PurL, 1 PurQ and 2 PurS subunits.

The protein resides in the cytoplasm. It catalyses the reaction N(2)-formyl-N(1)-(5-phospho-beta-D-ribosyl)glycinamide + L-glutamine + ATP + H2O = 2-formamido-N(1)-(5-O-phospho-beta-D-ribosyl)acetamidine + L-glutamate + ADP + phosphate + H(+). It participates in purine metabolism; IMP biosynthesis via de novo pathway; 5-amino-1-(5-phospho-D-ribosyl)imidazole from N(2)-formyl-N(1)-(5-phospho-D-ribosyl)glycinamide: step 1/2. Functionally, part of the phosphoribosylformylglycinamidine synthase complex involved in the purines biosynthetic pathway. Catalyzes the ATP-dependent conversion of formylglycinamide ribonucleotide (FGAR) and glutamine to yield formylglycinamidine ribonucleotide (FGAM) and glutamate. The FGAM synthase complex is composed of three subunits. PurQ produces an ammonia molecule by converting glutamine to glutamate. PurL transfers the ammonia molecule to FGAR to form FGAM in an ATP-dependent manner. PurS interacts with PurQ and PurL and is thought to assist in the transfer of the ammonia molecule from PurQ to PurL. This chain is Phosphoribosylformylglycinamidine synthase subunit PurL, found in Pyrobaculum calidifontis (strain DSM 21063 / JCM 11548 / VA1).